Consider the following 241-residue polypeptide: Uracil-DNA glycosylase (241 aa).

Aspartate 71 acts as the Proton acceptor in catalysis.

This sequence belongs to the uracil-DNA glycosylase (UDG) superfamily. UNG family.

It localises to the cytoplasm. The catalysed reaction is Hydrolyzes single-stranded DNA or mismatched double-stranded DNA and polynucleotides, releasing free uracil.. In terms of biological role, excises uracil residues from the DNA which can arise as a result of misincorporation of dUMP residues by DNA polymerase or due to deamination of cytosine. In Xanthomonas campestris pv. campestris (strain 8004), this protein is Uracil-DNA glycosylase.